We begin with the raw amino-acid sequence, 660 residues long: Dual specificity mitogen-activated protein kinase kinase 1 (660 aa).

Residues 1-57 (MNTNTNTNTNISSSGNNIINTPTTNNNNKNNNNNNNNNNNSNNSNNNSSNNNNNNNN) show a composition bias toward low complexity. Disordered stretches follow at residues 1 to 60 (MNTN…NAVG), 105 to 169 (KGES…FNNL), and 204 to 229 (NNNY…SNNN). A Glycyl lysine isopeptide (Lys-Gly) (interchain with G-Cter in SUMO) cross-link involves residue K105. The span at 123–148 (LHSNLNPQLLASPTSSESMDFNQGFY) shows a compositional bias: polar residues. A compositionally biased stretch (low complexity) spans 149-169 (NNNNNNNNNNNNNNLNNFNNL). The Protein kinase domain occupies 292–641 (LKIIRVLGRG…ASNLLNHEFV (350 aa)). Residues 298-306 (LGRGAGGVV) and K321 contribute to the ATP site. D414 functions as the Proton acceptor in the catalytic mechanism. 2 disordered regions span residues 491–510 (SNLP…QQQQ) and 539–573 (NNSN…VLDI). Low complexity-rich tracts occupy residues 496-510 (QQQQ…QQQQ) and 539-569 (NNSN…NNNN).

Belongs to the protein kinase superfamily. STE Ser/Thr protein kinase family. MAP kinase kinase subfamily. Interacts with mip1. Mg(2+) serves as cofactor. Post-translationally, sumoylated and ubiquitinated in response to chemoattractant stimulation. Sumoylation is linked to kinase activation and results in translocation.

It is found in the cytoplasm. The protein resides in the nucleus. It catalyses the reaction L-seryl-[protein] + ATP = O-phospho-L-seryl-[protein] + ADP + H(+). The enzyme catalyses L-threonyl-[protein] + ATP = O-phospho-L-threonyl-[protein] + ADP + H(+). It carries out the reaction L-tyrosyl-[protein] + ATP = O-phospho-L-tyrosyl-[protein] + ADP + H(+). Its function is as follows. Required for cAMP-mediated activation of guanylyl cyclase activity and plays an essential role in aggregation, morphogenesis, and chemotaxis. Appears to act upstream of erk1 but not erk2. The polypeptide is Dual specificity mitogen-activated protein kinase kinase 1 (Dictyostelium discoideum (Social amoeba)).